The chain runs to 137 residues: Large ribosomal subunit protein uL16 (137 aa).

This sequence belongs to the universal ribosomal protein uL16 family. As to quaternary structure, part of the 50S ribosomal subunit.

In terms of biological role, binds 23S rRNA and is also seen to make contacts with the A and possibly P site tRNAs. This is Large ribosomal subunit protein uL16 from Pseudomonas putida (strain ATCC 47054 / DSM 6125 / CFBP 8728 / NCIMB 11950 / KT2440).